We begin with the raw amino-acid sequence, 898 residues long: Netrin receptor UNC5A (898 aa).

A signal peptide spans 1-25 (MAVRPGLWPVLLGIVLAAWLRGSGA). The Extracellular segment spans residues 26-361 (QQSATVANPV…TASCPEDVAL (336 aa)). The 98-residue stretch at 44-141 (PHFLVEPEDV…SGTTKSQKAY (98 aa)) folds into the Ig-like domain. Cystine bridges form between Cys65-Cys126, Cys77-Cys124, and Cys170-Cys221. N-linked (GlcNAc...) asparagine glycans are attached at residues Asn107 and Asn218. Residues 155–238 (PLAKEVSLEQ…RRRSTSAAVI (84 aa)) enclose the Ig-like C2-type domain. TSP type-1 domains follow at residues 242–296 (NGGW…TLCP) and 298–350 (DGSW…DLCL). C-linked (Man) tryptophan glycosylation is found at Trp245, Trp248, and Trp251. Intrachain disulfides connect Cys254/Cys291, Cys258/Cys295, and Cys269/Cys281. Residues Trp301 and Trp304 are each glycosylated (C-linked (Man) tryptophan). Intrachain disulfides connect Cys310/Cys344, Cys314/Cys349, and Cys322/Cys334. A glycan (N-linked (GlcNAc...) asparagine) is linked at Asn343. Residues 362–382 (YIGLVAVAVCLFLLLLALGLI) form a helical membrane-spanning segment. Over 383-898 (YCRKKEGLDS…GLFTVSEAEC (516 aa)) the chain is Cytoplasmic. The ZU5 domain maps to 497 to 640 (NMAYGTFNFL…LGRFALVGEA (144 aa)). Residues 661–679 (SLEYNIRVYCLHDTHDALK) form an interaction with DCC region. Residues 817-897 (QKIIASLDPP…AGLFTVSEAE (81 aa)) form the Death domain.

This sequence belongs to the unc-5 family. Homodimer and homooligomer. Interacts with the cytoplasmic part of DCC. Interacts with MAGED1. Interacts with PRKCABP, possibly mediating some interaction with PKC. Interacts (via extracellular domain) with FLRT2 (via extracellular domain). Interacts (via extracellular domain) with FLRT3 (via extracellular domain). Post-translationally, phosphorylated on cytoplasmic tyrosine residues. Phosphorylated by PKC in vitro. In terms of processing, proteolytically cleaved by caspases during apoptosis. The cleavage does not take place when the receptor is associated with netrin ligand. Its cleavage by caspases is required to induce apoptosis. The two extracellular TSRs of UNC5A contain WxxWxxWxxC motifs that can be C-mannosylated on all tryptophans. DPY19L1 preferentially mannosylates the first two tryptophans and DPY19L3 prefers the third. C-mannosylation by DPY19L1 is required for transport of UNC5A from the endoplasmic reticulum to the cell surface. As to expression, mainly expressed in regions of differentiating neurons. Expressed at early stages of neural tube development in the ventral spinal cord. In developing hindbrain, it colocalizes with a number of cranial motor neuron subpopulations from embryonic E11 to E14, while DCC is expressed by motor neurons at E12. Also expressed in non-neural structures, such as the basal plane of the hindbrain and midbrain, in the developing hypothalamus, thalamus and in the pallidum.

The protein resides in the cell membrane. The protein localises to the membrane raft. It is found in the cell projection. It localises to the neuron projection. Functionally, receptor for netrin required for axon guidance. Functions in the netrin signaling pathway and promotes neurite outgrowth in response to NTN1. Mediates axon repulsion of neuronal growth cones in the developing nervous system in response to netrin. Axon repulsion in growth cones may be mediated by its association with DCC that may trigger signaling for repulsion. It also acts as a dependence receptor required for apoptosis induction when not associated with netrin ligand. This is Netrin receptor UNC5A (Unc5a) from Rattus norvegicus (Rat).